Reading from the N-terminus, the 314-residue chain is Putative glycosyltransferase ORF31 (314 aa).

It belongs to the glycosyltransferase group 1 family.

The chain is Putative glycosyltransferase ORF31 from Haloarcula hispanica (His1V).